A 249-amino-acid polypeptide reads, in one-letter code: Triosephosphate isomerase (249 aa).

Substrate is bound at residue 8–10 (NWK). The Electrophile role is filled by His95. Residue Glu166 is the Proton acceptor of the active site. Residues Gly172, Ser211, and 232 to 233 (GG) contribute to the substrate site.

It belongs to the triosephosphate isomerase family. As to quaternary structure, homodimer.

It localises to the cytoplasm. The catalysed reaction is D-glyceraldehyde 3-phosphate = dihydroxyacetone phosphate. It participates in carbohydrate biosynthesis; gluconeogenesis. It functions in the pathway carbohydrate degradation; glycolysis; D-glyceraldehyde 3-phosphate from glycerone phosphate: step 1/1. Its function is as follows. Involved in the gluconeogenesis. Catalyzes stereospecifically the conversion of dihydroxyacetone phosphate (DHAP) to D-glyceraldehyde-3-phosphate (G3P). The sequence is that of Triosephosphate isomerase from Granulibacter bethesdensis (strain ATCC BAA-1260 / CGDNIH1).